The chain runs to 105 residues: Phosphoribosyl-ATP pyrophosphatase (105 aa).

Belongs to the PRA-PH family.

The protein resides in the cytoplasm. It catalyses the reaction 1-(5-phospho-beta-D-ribosyl)-ATP + H2O = 1-(5-phospho-beta-D-ribosyl)-5'-AMP + diphosphate + H(+). It participates in amino-acid biosynthesis; L-histidine biosynthesis; L-histidine from 5-phospho-alpha-D-ribose 1-diphosphate: step 2/9. The chain is Phosphoribosyl-ATP pyrophosphatase from Methylococcus capsulatus (strain ATCC 33009 / NCIMB 11132 / Bath).